The primary structure comprises 224 residues: Putative adhesin A1C_06425 (224 aa).

The signal sequence occupies residues methionine 1 to alanine 22.

This chain is Putative adhesin A1C_06425, found in Rickettsia akari (strain Hartford).